Consider the following 316-residue polypeptide: SHC-transforming protein homolog 1 (316 aa).

A PID domain is found at glycine 16–asparagine 158. The SH2 domain maps to tryptophan 211 to valine 307. The segment at serine 292–glutamate 316 is disordered.

Interacts (via PID domain) with daf-2 (via cytoplasmic domain). Interacts with mek-1; the interaction is independent of mek-1 catalytic activity and is constitutive. Interacts (via N-terminus) with mlk-1 (via NPQY motif when phosphorylated on tyrosine residue). Does not interact with jkk-1 or sek-1. Interacts (via SH2 domain) with svh-2. Interacts with svh-4. Expressed in hypodermis, intestine, head and tail neurons, pharynx, gonads, vulva and body muscles.

It is found in the cytoplasm. The protein localises to the nucleus. Its subcellular location is the cell membrane. Its function is as follows. Scaffold protein which plays an important role in the activation of the JNK pathway composed of mlk-1, mek-1 and kgb-1; by bringing together mek-1 and mlk-1, promotes mlk-1-mediated phosphorylation and activation of mek-1 which in turn phosphorylates kgb-1. In addition, negatively modulates the activation of the insulin/IGF-1-like signaling (IIS) probably by inhibiting the insulin receptor daf-2. Positively regulates the activity of the transcription factor daf-16/FOXO by both inhibiting IIS and activating the JNK pathway. Plays a role in maintaining gonadal basement membrane integrity through activation of the JNK pathway components mek-1 and jnk-1. Involved in the response to several environmental stresses including heavy metal ions (Cu(2+) and Cd(2+)), heat, oxidative and protein misfolding (ER) stresses. Plays a role in gonad and germline development following the L1 diapause. Plays a role in life span and egg laying. Plays a role in axon regeneration after injury. This is SHC-transforming protein homolog 1 from Caenorhabditis elegans.